Here is a 427-residue protein sequence, read N- to C-terminus: Glutamate-1-semialdehyde 2,1-aminomutase (427 aa).

N6-(pyridoxal phosphate)lysine is present on Lys-265.

The protein belongs to the class-III pyridoxal-phosphate-dependent aminotransferase family. HemL subfamily. In terms of assembly, homodimer. Pyridoxal 5'-phosphate serves as cofactor.

It localises to the cytoplasm. The catalysed reaction is (S)-4-amino-5-oxopentanoate = 5-aminolevulinate. It functions in the pathway porphyrin-containing compound metabolism; protoporphyrin-IX biosynthesis; 5-aminolevulinate from L-glutamyl-tRNA(Glu): step 2/2. This chain is Glutamate-1-semialdehyde 2,1-aminomutase, found in Pseudomonas putida (strain ATCC 47054 / DSM 6125 / CFBP 8728 / NCIMB 11950 / KT2440).